The primary structure comprises 414 residues: Glutamyl-tRNA reductase (414 aa).

Residues 51–54, S107, 112–114, and Q118 each bind substrate; these read TCNR and EYE. C52 functions as the Nucleophile in the catalytic mechanism. 187–192 lines the NADP(+) pocket; sequence GAGEIG.

The protein belongs to the glutamyl-tRNA reductase family. In terms of assembly, homodimer.

The enzyme catalyses (S)-4-amino-5-oxopentanoate + tRNA(Glu) + NADP(+) = L-glutamyl-tRNA(Glu) + NADPH + H(+). It participates in porphyrin-containing compound metabolism; protoporphyrin-IX biosynthesis; 5-aminolevulinate from L-glutamyl-tRNA(Glu): step 1/2. Its function is as follows. Catalyzes the NADPH-dependent reduction of glutamyl-tRNA(Glu) to glutamate 1-semialdehyde (GSA). The protein is Glutamyl-tRNA reductase of Sulfolobus acidocaldarius (strain ATCC 33909 / DSM 639 / JCM 8929 / NBRC 15157 / NCIMB 11770).